Here is a 524-residue protein sequence, read N- to C-terminus: G1/S-specific cyclin-E (524 aa).

The tract at residues 1–155 (MAGRKSSRTA…EESHEMVRLE (155 aa)) is disordered. Residues 18–47 (KPERKSAILSPHDELRERLLETAIDMKENI) are compositionally biased toward basic and acidic residues. Over residues 48–62 (PQRNTRNSSVGSQKS) the composition is skewed to polar residues. 3 stretches are compositionally biased toward basic and acidic residues: residues 63–78 (DCSETRKRRSTKEGPA), 86–95 (KHRNGSREDS), and 146–155 (EESHEMVRLE).

It belongs to the cyclin family. Cyclin E subfamily. In terms of assembly, interacts with a member of the CDK2/CDK protein kinases to form a serine/threonine kinase holoenzyme complex. The cyclin subunit imparts substrate specificity to the complex. In terms of tissue distribution, expressed dynamically in proliferating cells throughout development. Detectable in larval blast cells undergoing active proliferation that give rise to all tissue types, including germline, intestine, hypodermis, neurons, and muscle.

The protein localises to the nucleus. It localises to the cytoplasm. Its subcellular location is the cytoskeleton. It is found in the microtubule organizing center. The protein resides in the centrosome. The protein localises to the centriole. Essential for the control of the cell cycle at the G1/S (start) transition. In association with cdk-2, regulates proliferation, quiescent state and cell fate during the development of several cell lineages. In the embryo, initiates the establishment of cell polarity through the recruitment of the centrosomal proteins spd-2 and spd-5 during prophase. During the development of the vulva, controls the onset of vulval cell terminal differentiation by controlling the duration of G1 phase. During hypoderm development at early larval stages, controls syncytial fate of seam cell daughter cells. Involved in the progression of cell division in the intestinal lineage in larvae, and in particular in endoreplication, a specific growth pathway in the intestinal epithelium, required for feeding and gut development in growing larvae. By controlling the activity of translational repressor gld-1, regulates the pool of germline stem cells and the size of the mitotic zone by preventing entry into meiosis. In addition, repression of expression by gld-1 prevents mitosis re-entry in meiotic germline cells. This is G1/S-specific cyclin-E from Caenorhabditis elegans.